The primary structure comprises 460 residues: Argininosuccinate lyase (460 aa).

The protein belongs to the lyase 1 family. Argininosuccinate lyase subfamily.

The protein localises to the cytoplasm. It carries out the reaction 2-(N(omega)-L-arginino)succinate = fumarate + L-arginine. The protein operates within amino-acid biosynthesis; L-arginine biosynthesis; L-arginine from L-ornithine and carbamoyl phosphate: step 3/3. The sequence is that of Argininosuccinate lyase from Sulfurimonas denitrificans (strain ATCC 33889 / DSM 1251) (Thiomicrospira denitrificans (strain ATCC 33889 / DSM 1251)).